The sequence spans 216 residues: MIVSTKLQDHFEKITKILSGFGVEGCISYGEITFSIRDQRDIHLILKKLKKEYLFEQLTDVTAVDYLTYGQSDWQVGKVVSQTGFSRGRQQDFKTAAVDNRFEIIYQLLSMANNVRIRVKCKLKDAQIILVDSVSDLWPSANWVEREVYDMFGIYFNNHPDLRRVLTDYGFVGHPLRKDFPQTGYVEMRYDENLGRVVYEPVEIDDRVNTPRVIRN.

It belongs to the complex I 30 kDa subunit family. NDH-1 is composed of 14 different subunits. Subunits NuoB, C, D, E, F, and G constitute the peripheral sector of the complex.

Its subcellular location is the cell inner membrane. It catalyses the reaction a quinone + NADH + 5 H(+)(in) = a quinol + NAD(+) + 4 H(+)(out). In terms of biological role, NDH-1 shuttles electrons from NADH, via FMN and iron-sulfur (Fe-S) centers, to quinones in the respiratory chain. The immediate electron acceptor for the enzyme in this species is believed to be ubiquinone. Couples the redox reaction to proton translocation (for every two electrons transferred, four hydrogen ions are translocated across the cytoplasmic membrane), and thus conserves the redox energy in a proton gradient. This chain is NADH-quinone oxidoreductase subunit C, found in Francisella tularensis subsp. holarctica (strain FTNF002-00 / FTA).